Reading from the N-terminus, the 311-residue chain is Catabolite control protein B (311 aa).

Residues 1-56 enclose the HTH lacI-type domain; sequence MANIKEIARLANVSVSTVSRVLNHHPYVSEEKRKLVHQVMKELDYTPNRTAIDLIR. The H-T-H motif DNA-binding region spans 4 to 23; sequence IKEIARLANVSVSTVSRVLN.

As to quaternary structure, seems to be complexed to phosphorylated HPr.

Its function is as follows. Transcriptional regulator involved in catabolite repression of several operons. The protein is Catabolite control protein B (ccpB) of Bacillus subtilis (strain 168).